The following is a 311-amino-acid chain: tRNA pseudouridine synthase B (311 aa).

Residue D39 is the Nucleophile of the active site. The interval 237 to 268 (RELSEQETTEISFGRRIAAGPGAGTPDAATAE) is disordered. Over residues 254-268 (AAGPGAGTPDAATAE) the composition is skewed to low complexity.

The protein belongs to the pseudouridine synthase TruB family. Type 1 subfamily.

It catalyses the reaction uridine(55) in tRNA = pseudouridine(55) in tRNA. Its function is as follows. Responsible for synthesis of pseudouridine from uracil-55 in the psi GC loop of transfer RNAs. The sequence is that of tRNA pseudouridine synthase B from Paenarthrobacter aurescens (strain TC1).